The sequence spans 1303 residues: MRILRGSPALSEFRVNKLLELCRELSLPVTGIYAEFAHFADVTAELDASEVQKLEKLLTYGPTIEEHEPEGLLLLTTPRPGTISPWSSKSTDIAHNCGLDKIARLERGTAFYIERSEELSELQLIELKAILHDRMMEVVFTDFESASALFAVSEPAPYTEVDLLTGGRKALEDANVTLGLALAEDEIDYLLESFTEKLERNPTDIELMMFAQANSEHCRHKIFNADWTIDGVKQEKSLFKMIKNTFEVTPDNVLSAYKDNAAVMTGSEVGRFFPDPETRQYNYHQEKTHILMKVETHNHPTAISPWPGASTGSGGEIRDEGATGIGGKPKAGLVAFSVSNLKIPNFVQPWETDFGKPSRIVTALDIMLEGPLGGAAFNNEFGRPNLLGYFRTYEEKVNSHAGEEVRGYHKPIMLAGGLGNIRDEHVQKKEIPVGASLIVLGGPAMNIGLGGGAASSMDSGSSSEDLDFASVQRENPEMERRCQEVIDRCWQLGDANPIAFIHDVGAGGISNALPELVDDGERGGIFNLRDVPNDEPGMSPLEIWCNESQERYVMAVADKDMATFDAICKRERAPYAVVGKATEERELKLEDSHFDNTPIDMPMDILLGKTPKMHRDAKTLKANNPAIDRSGIEMNEAVDRVLRLPTVAEKTFLITIGDRSVTGLVARDQMVGPWQVPVANCAVTAASYDSYHGEAMSLGERTPVALLDFGASARLAVGEAITNIAATNIGDIKHIKLSANWMSPAGHPGEDAGLYEAVKAVGEELCPALGLTIPVGKDSMSMKTKWEENGEQKEVTSPLSLVITAFARVEDVRKTITPQLRTPDNLEGLGDTSLVLIDLGNGKNRLGATALAQVYKQLGDKPADVDNAAQLKGFYEGVQALVANDQVVAYHDKGDGGLFVTLAEMAFAGHCGVNANIEALGEDTLAALFNEELGAVIQVRNDDLDAVLSTLAANGLEACSHVIGSVEASDELVIKSGESVVIERNRTELRTIWAETTHKMQGLRDNPACADQEHEAKKDNSDPGLNVKLSFDVNEDIAAPFINTGAKPKMAILREQGVNSHVEMAAAFDRAGFEATDIHMSDILTGQAVLEEYNGLVACGGFSYGDVLGAGEGWAKSVLFNDSTRDQFENFFKREDTFSLGVCNGCQMLSNLRDLIPGAEYWPRFVRNESERFEARFSLVEVQKSDSVFFNGMEGSRMPIAVSHGEGRVEVRDNDHLNAIENSGTVALRYVDNHGNPTQQYPNNPNGSPNAITGLTTTDGRVTIMMPHPERVFRTVANSWSPEGWGENGAWMRMFQNARKNIG.

ATP contacts are provided by residues 308–319 and A679; that span reads GASTGSGGEIRD. 3 residues coordinate Mg(2+): E719, N723, and D892. Residues 1003–1023 are disordered; the sequence is LRDNPACADQEHEAKKDNSDP. A compositionally biased stretch (basic and acidic residues) spans 1011–1021; the sequence is DQEHEAKKDNS. The 254-residue stretch at 1050–1303 folds into the Glutamine amidotransferase type-1 domain; it reads MAILREQGVN…MFQNARKNIG (254 aa). C1143 functions as the Nucleophile in the catalytic mechanism. Active-site residues include H1268 and E1270.

This sequence in the N-terminal section; belongs to the FGAMS family. In terms of assembly, monomer.

The protein localises to the cytoplasm. It carries out the reaction N(2)-formyl-N(1)-(5-phospho-beta-D-ribosyl)glycinamide + L-glutamine + ATP + H2O = 2-formamido-N(1)-(5-O-phospho-beta-D-ribosyl)acetamidine + L-glutamate + ADP + phosphate + H(+). It participates in purine metabolism; IMP biosynthesis via de novo pathway; 5-amino-1-(5-phospho-D-ribosyl)imidazole from N(2)-formyl-N(1)-(5-phospho-D-ribosyl)glycinamide: step 1/2. Phosphoribosylformylglycinamidine synthase involved in the purines biosynthetic pathway. Catalyzes the ATP-dependent conversion of formylglycinamide ribonucleotide (FGAR) and glutamine to yield formylglycinamidine ribonucleotide (FGAM) and glutamate. In Aliivibrio fischeri (strain ATCC 700601 / ES114) (Vibrio fischeri), this protein is Phosphoribosylformylglycinamidine synthase.